A 602-amino-acid polypeptide reads, in one-letter code: Threonine--tRNA ligase (602 aa).

Residues 208-499 (DHRKLGTELK…LTEHCAGEFP (292 aa)) form a catalytic region. Zn(2+) contacts are provided by Cys300, His351, and His476.

This sequence belongs to the class-II aminoacyl-tRNA synthetase family. In terms of assembly, homodimer. Zn(2+) serves as cofactor.

Its subcellular location is the cytoplasm. The catalysed reaction is tRNA(Thr) + L-threonine + ATP = L-threonyl-tRNA(Thr) + AMP + diphosphate + H(+). Catalyzes the attachment of threonine to tRNA(Thr) in a two-step reaction: L-threonine is first activated by ATP to form Thr-AMP and then transferred to the acceptor end of tRNA(Thr). Also edits incorrectly charged L-seryl-tRNA(Thr). The chain is Threonine--tRNA ligase from Campylobacter jejuni (strain RM1221).